The chain runs to 243 residues: NAD-dependent protein deacetylase (243 aa).

The Deacetylase sirtuin-type domain maps to 1–243 (MRNDLETLKH…VSVVKSLMTE (243 aa)). Alanine 24, phenylalanine 35, arginine 36, glutamine 105, isoleucine 107, aspartate 108, and histidine 123 together coordinate NAD(+). Phenylalanine 35 serves as a coordination point for nicotinamide. Nicotinamide-binding residues include isoleucine 107 and aspartate 108. Residue histidine 123 is the Proton acceptor of the active site. Positions 131, 134, 151, and 154 each coordinate Zn(2+). NAD(+)-binding residues include serine 192, serine 193, asparagine 215, and aspartate 232.

This sequence belongs to the sirtuin family. Class U subfamily. It depends on Zn(2+) as a cofactor.

The protein resides in the cytoplasm. It carries out the reaction N(6)-acetyl-L-lysyl-[protein] + NAD(+) + H2O = 2''-O-acetyl-ADP-D-ribose + nicotinamide + L-lysyl-[protein]. Functionally, NAD-dependent protein deacetylase which modulates the activities of several enzymes which are inactive in their acetylated form. This Staphylococcus aureus (strain MSSA476) protein is NAD-dependent protein deacetylase.